Reading from the N-terminus, the 110-residue chain is uncharacterized protein (110 aa).

The protein belongs to the HesB/IscA family.

This is an uncharacterized protein from Rickettsia prowazekii (strain Madrid E).